Consider the following 391-residue polypeptide: UDP-N-acetylglucosamine--N-acetylmuramyl-(pentapeptide) pyrophosphoryl-undecaprenol N-acetylglucosamine transferase (391 aa).

Residues 11 to 13, R176, S206, and Q312 each bind UDP-N-acetyl-alpha-D-glucosamine; that span reads TGG.

This sequence belongs to the glycosyltransferase 28 family. MurG subfamily.

It is found in the cell inner membrane. It carries out the reaction di-trans,octa-cis-undecaprenyl diphospho-N-acetyl-alpha-D-muramoyl-L-alanyl-D-glutamyl-meso-2,6-diaminopimeloyl-D-alanyl-D-alanine + UDP-N-acetyl-alpha-D-glucosamine = di-trans,octa-cis-undecaprenyl diphospho-[N-acetyl-alpha-D-glucosaminyl-(1-&gt;4)]-N-acetyl-alpha-D-muramoyl-L-alanyl-D-glutamyl-meso-2,6-diaminopimeloyl-D-alanyl-D-alanine + UDP + H(+). It participates in cell wall biogenesis; peptidoglycan biosynthesis. Its function is as follows. Cell wall formation. Catalyzes the transfer of a GlcNAc subunit on undecaprenyl-pyrophosphoryl-MurNAc-pentapeptide (lipid intermediate I) to form undecaprenyl-pyrophosphoryl-MurNAc-(pentapeptide)GlcNAc (lipid intermediate II). The polypeptide is UDP-N-acetylglucosamine--N-acetylmuramyl-(pentapeptide) pyrophosphoryl-undecaprenol N-acetylglucosamine transferase (Treponema denticola (strain ATCC 35405 / DSM 14222 / CIP 103919 / JCM 8153 / KCTC 15104)).